The sequence spans 590 residues: Probable indole-3-acetic acid-amido synthetase GH3.1 (590 aa).

Belongs to the IAA-amido conjugating enzyme family.

Catalyzes the synthesis of indole-3-acetic acid (IAA)-amino acid conjugates, providing a mechanism for the plant to cope with the presence of excess auxin. The polypeptide is Probable indole-3-acetic acid-amido synthetase GH3.1 (GH3.1) (Arabidopsis thaliana (Mouse-ear cress)).